We begin with the raw amino-acid sequence, 130 residues long: HTH-type transcriptional regulator KmtR (130 aa).

Positions 10–104 (LPDDQVCLVV…DAVFNAEHAG (95 aa)) constitute an HTH arsR-type domain. Residues 44-67 (VNELAEQVGKPAPSVSQHLAKLRM) constitute a DNA-binding region (H-T-H motif). Residues 110-130 (HHRAAGGLQSVAKASATKDVG) form a disordered region.

With respect to regulation, binding to DNA is inhibited by nickel and cobalt ions. Its function is as follows. Represses expression of Rv2025c and its own expression. Acts by binding to the promoter regions. This chain is HTH-type transcriptional regulator KmtR (kmtR), found in Mycobacterium tuberculosis (strain ATCC 25618 / H37Rv).